Consider the following 102-residue polypeptide: ATP-dependent Clp protease adapter protein ClpS (102 aa).

It belongs to the ClpS family. In terms of assembly, binds to the N-terminal domain of the chaperone ClpA.

In terms of biological role, involved in the modulation of the specificity of the ClpAP-mediated ATP-dependent protein degradation. In Nitrosospira multiformis (strain ATCC 25196 / NCIMB 11849 / C 71), this protein is ATP-dependent Clp protease adapter protein ClpS.